The sequence spans 862 residues: Aldehyde-alcohol dehydrogenase (862 aa).

C244 is an active-site residue. 420–425 contributes to the NAD(+) binding site; sequence GFWGGN.

This sequence in the N-terminal section; belongs to the aldehyde dehydrogenase family. The protein in the C-terminal section; belongs to the iron-containing alcohol dehydrogenase family.

The catalysed reaction is a primary alcohol + NAD(+) = an aldehyde + NADH + H(+). It carries out the reaction a secondary alcohol + NAD(+) = a ketone + NADH + H(+). It catalyses the reaction an aldehyde + NAD(+) + H2O = a carboxylate + NADH + 2 H(+). Its function is as follows. Has both aldehyde and alcohol dehydrogenase activities. Can use acetaldehyde, butyraldehyde, butanol and ethanol. The chain is Aldehyde-alcohol dehydrogenase from Clostridium acetobutylicum (strain ATCC 824 / DSM 792 / JCM 1419 / IAM 19013 / LMG 5710 / NBRC 13948 / NRRL B-527 / VKM B-1787 / 2291 / W).